The primary structure comprises 325 residues: tRNA pseudouridine synthase B (325 aa).

The active-site Nucleophile is the Asp49.

Belongs to the pseudouridine synthase TruB family. Type 1 subfamily.

It catalyses the reaction uridine(55) in tRNA = pseudouridine(55) in tRNA. Functionally, responsible for synthesis of pseudouridine from uracil-55 in the psi GC loop of transfer RNAs. This is tRNA pseudouridine synthase B from Mesorhizobium japonicum (strain LMG 29417 / CECT 9101 / MAFF 303099) (Mesorhizobium loti (strain MAFF 303099)).